A 714-amino-acid polypeptide reads, in one-letter code: Methylmalonyl-CoA mutase (714 aa).

In terms of domain architecture, B12-binding spans 584-714 (RPRILIAKMG…VLNLISQHHD (131 aa)). An adenosylcob(III)alamin-binding site is contributed by His597.

This sequence belongs to the methylmalonyl-CoA mutase family. As to quaternary structure, homodimer. Interacts with ArgK. The cofactor is adenosylcob(III)alamin.

The catalysed reaction is (R)-methylmalonyl-CoA = succinyl-CoA. Its function is as follows. Catalyzes the interconversion of succinyl-CoA and methylmalonyl-CoA. Could be part of a pathway that converts succinate to propionate. This is Methylmalonyl-CoA mutase (scpA) from Escherichia coli (strain K12).